The chain runs to 411 residues: F-box protein At4g19940 (411 aa).

The region spanning Arg29–Leu75 is the F-box domain.

This is F-box protein At4g19940 from Arabidopsis thaliana (Mouse-ear cress).